A 1037-amino-acid chain; its full sequence is Glycine dehydrogenase (decarboxylating) 1, mitochondrial (1037 aa).

A mitochondrion-targeting transit peptide spans 1-67 (MERARRLAYR…AFGRHQQTRS (67 aa)). Cys-98 is subject to S-glutathionyl cysteine; transient. Cys-402 and Cys-463 each carry S-glutathionyl cysteine. Lys-774 bears the N6-(pyridoxal phosphate)lysine mark. An S-glutathionyl cysteine; transient mark is found at Cys-777, Cys-943, and Cys-1022.

This sequence belongs to the GcvP family. Homodimer. The glycine cleavage system is composed of four proteins: P, T, L and H. Requires pyridoxal 5'-phosphate as cofactor. Post-translationally, glutathionylated at Cys-98, Cys-777, Cys-943 and Cys-1022 after S-nitrosoglutathione treatment. S-nitrosylated at unknown positions by nitric oxide. As to expression, expressed in leaves. Detected in roots, stems, flowers and siliques.

It is found in the mitochondrion. The enzyme catalyses N(6)-[(R)-lipoyl]-L-lysyl-[glycine-cleavage complex H protein] + glycine + H(+) = N(6)-[(R)-S(8)-aminomethyldihydrolipoyl]-L-lysyl-[glycine-cleavage complex H protein] + CO2. With respect to regulation, inhibited by harpin, S-nitrosoglutathione (GSNO), nitric oxide, N-ethylmaleimide and 5,5'-dithiobis-(2-nitrobenzoic acid). In terms of biological role, the glycine decarboxylase (GDC) or glycine cleavage system catalyzes the degradation of glycine. The P protein binds the alpha-amino group of glycine through its pyridoxal phosphate cofactor; CO(2) is released and the remaining methylamine moiety is then transferred to the lipoamide cofactor of the H protein. The chain is Glycine dehydrogenase (decarboxylating) 1, mitochondrial (GLDP1) from Arabidopsis thaliana (Mouse-ear cress).